Here is a 273-residue protein sequence, read N- to C-terminus: uncharacterized protein (273 aa).

10–34 (VITGAATGIGQATAEVFANEGARVI) is an NAD(+) binding site. Substrate is bound at residue Ser142. Tyr155 (proton acceptor) is an active-site residue.

This sequence belongs to the short-chain dehydrogenases/reductases (SDR) family.

This is an uncharacterized protein from Bacillus subtilis (strain 168).